A 514-amino-acid polypeptide reads, in one-letter code: JmjC domain-containing histone demethylation protein 1 (514 aa).

The segment at 4-62 (IDTCPICVESPLEDSTTFNNIAWLQCDICNQWFHASCLKIPKIEVNNLHSYHCEGCSKS) adopts a PHD-type zinc-finger fold. The 165-residue stretch at 220-384 (SDVDSFGKSF…MHLRIYEIEK (165 aa)) folds into the JmjC domain. Position 267 (T267) interacts with substrate. The Fe cation site is built by H270 and D272. K287 is a substrate binding site. H352 is a Fe cation binding site. Residues 432–454 (KSEAHSRGEVHTKTETHAVKDEP) are compositionally biased toward basic and acidic residues. The tract at residues 432–456 (KSEAHSRGEVHTKTETHAVKDEPQP) is disordered.

Belongs to the JHDM1 histone demethylase family. Fe(2+) serves as cofactor.

It is found in the nucleus. The enzyme catalyses N(6),N(6)-dimethyl-L-lysyl(36)-[histone H3] + 2 2-oxoglutarate + 2 O2 = L-lysyl(36)-[histone H3] + 2 formaldehyde + 2 succinate + 2 CO2. Histone demethylase that specifically demethylates 'Lys-36' of histone H3, thereby playing a central role in histone code. In Debaryomyces hansenii (strain ATCC 36239 / CBS 767 / BCRC 21394 / JCM 1990 / NBRC 0083 / IGC 2968) (Yeast), this protein is JmjC domain-containing histone demethylation protein 1 (JHD1).